Consider the following 334-residue polypeptide: Protein-glutamate methylesterase/protein-glutamine glutaminase 1 (334 aa).

A Response regulatory domain is found at 2-120 (NIGIVNDLPL…GAAGDTTKLL (119 aa)). Aspartate 53 is modified (4-aspartylphosphate). Residues 145–334 (RAGGGPLIAI…AGELAALARI (190 aa)) enclose the CheB-type methylesterase domain. Active-site residues include serine 157, histidine 184, and aspartate 277.

Belongs to the CheB family. Post-translationally, phosphorylated by CheA. Phosphorylation of the N-terminal regulatory domain activates the methylesterase activity.

It is found in the cytoplasm. It catalyses the reaction [protein]-L-glutamate 5-O-methyl ester + H2O = L-glutamyl-[protein] + methanol + H(+). The enzyme catalyses L-glutaminyl-[protein] + H2O = L-glutamyl-[protein] + NH4(+). Functionally, involved in chemotaxis. Part of a chemotaxis signal transduction system that modulates chemotaxis in response to various stimuli. Catalyzes the demethylation of specific methylglutamate residues introduced into the chemoreceptors (methyl-accepting chemotaxis proteins or MCP) by CheR. Also mediates the irreversible deamidation of specific glutamine residues to glutamic acid. The polypeptide is Protein-glutamate methylesterase/protein-glutamine glutaminase 1 (Burkholderia lata (strain ATCC 17760 / DSM 23089 / LMG 22485 / NCIMB 9086 / R18194 / 383)).